We begin with the raw amino-acid sequence, 448 residues long: DNA repair protein RadA (448 aa).

The C4-type zinc-finger motif lies at 10-27; the sequence is CQHCGFTSPKWLGKCVQC. Position 96-103 (96-103) interacts with ATP; that stretch reads GSPGVGKS. Positions 253 to 257 match the RadA KNRFG motif motif; that stretch reads KNRFG. The segment at 351–448 is lon-protease-like; that stretch reads DVFINVSGGI…NAVGKIVEWM (98 aa).

This sequence belongs to the RecA family. RadA subfamily.

Functionally, DNA-dependent ATPase involved in processing of recombination intermediates, plays a role in repairing DNA breaks. Stimulates the branch migration of RecA-mediated strand transfer reactions, allowing the 3' invading strand to extend heteroduplex DNA faster. Binds ssDNA in the presence of ADP but not other nucleotides, has ATPase activity that is stimulated by ssDNA and various branched DNA structures, but inhibited by SSB. Does not have RecA's homology-searching function. The protein is DNA repair protein RadA of Helicobacter pylori (strain ATCC 700392 / 26695) (Campylobacter pylori).